The following is a 306-amino-acid chain: Follistatin-related protein 1 (306 aa).

The signal sequence occupies residues methionine 1–glycine 18. The 24-residue stretch at isoleucine 28–leucine 51 folds into the Follistatin-like domain. Cystine bridges form between cysteine 29-cysteine 40, cysteine 34-cysteine 50, cysteine 52-cysteine 82, cysteine 56-cysteine 75, and cysteine 64-cysteine 96. Residues glycine 46–glutamate 98 enclose the Kazal-like domain. Asparagine 142 is a glycosylation site (N-linked (GlcNAc...) asparagine). Positions asparagine 142–alanine 176 constitute an EF-hand 1 domain. Serine 163 carries the post-translational modification Phosphoserine. Asparagine 173 and asparagine 178 each carry an N-linked (GlcNAc...) asparagine glycan. One can recognise an EF-hand 2 domain in the interval leucine 191–proline 226. One can recognise a VWFC domain in the interval cysteine 231 to alanine 285.

As to quaternary structure, homodimer. Interacts with SCN10A. Interacts with DIP2A; DIP2A may act as a cell surface receptor for FSTL1. Interacts with BMP4. Interacts with CD14; this interaction promotes TL4-mediated signaling cascade.

The protein localises to the secreted. In terms of biological role, secreted glycoprotein that is involved in various physiological processes, such as angiogenesis, regulation of the immune response, cell proliferation and differentiation. Plays a role in the development of the central nervous system, skeletal system, lungs, and ureter. Promotes endothelial cell survival, migration and differentiation into network structures in an AKT-dependent manner. Also promotes survival of cardiac myocytes. Initiates various signaling cascades by activating different receptors on the cell surface such as DIP2A, TLR4 or BMP receptors. This chain is Follistatin-related protein 1 (Fstl1), found in Rattus norvegicus (Rat).